A 1758-amino-acid chain; its full sequence is MKVSDRRKFEKANFDEFESALNNKNDLVHCPSITLFESIPTEVRSFYEDEKSGLIKVVKFRTGAMDRKRSFEKVVISVMVGKNVKKFLTFVEDEPDFQGGPIPSKYLIPKKINLMVYTLFQVHTLKFNRKDYDTLSLFYLNRGYYNELSFRVLERCHEIASARPNDSSTMRTFTDFVSGAPIVRSLQKSTIRKYGYNLAPYMFLLLHVDELSIFSAYQASLPGEKKVDTERLKRDLCPRKPIEIKYFSQICNDMMNKKDRLGDILHIILRACALNFGAGPRGGAGDEEDRSITNEEPIIPSVDEHGLKVCKLRSPNTPRRLRKTLDAVKALLVSSCACTARDLDIFDDNNGVAMWKWIKILYHEVAQETTLKDSYRITLVPSSDGISLLAFAGPQRNVYVDDTTRRIQLYTDYNKNGSSEPRLKTLDGLTSDYVFYFVTVLRQMQICALGNSYDAFNHDPWMDVVGFEDPNQVTNRDISRIVLYSYMFLNTAKGCLVEYATFRQYMRELPKNAPQKLNFREMRQGLIALGRHCVGSRFETDLYESATSELMANHSVQTGRNIYGVDSFSLTSVSGTTATLLQERASERWIQWLGLESDYHCSFSSTRNAEDVVAGEAASSNHHQKISRVTRKRPREPKSTNDILVAGQKLFGSSFEFRDLHQLRLCYEIYMADTPSVAVQAPPGYGKTELFHLPLIALASKGDVEYVSFLFVPYTVLLANCMIRLGRCGCLNVAPVRNFIEEGYDGVTDLYVGIYDDLASTNFTDRIAAWENIVECTFRTNNVKLGYLIVDEFHNFETEVYRQSQFGGITNLDFDAFEKAIFLSGTAPEAVADAALQRIGLTGLAKKSMDINELKRSEDLSRGLSSYPTRMFNLIKEKSEVPLGHVHKIRKKVESQPEEALKLLLALFESEPESKAIVVASTTNEVEELACSWRKYFRVVWIHGKLGAAEKVSRTKEFVTDGSMQVLIGTKLVTEGIDIKQLMMVIMLDNRLNIIELIQGVGRLRDGGLCYLLSRKNSWAARNRKGELPPIKEGCITEQVREFYGLESKKGKKGQHVGCCGSRTDLSADTVELIERMDRLAEKQATASMSIVALPSSFQESNSSDRYRKYCSSDEDSNTCIHGSANASTNASTNAITTASTNVRTNATTNASTNATTNASTNASTNATTNASTNATTNSSTNATTTASTNVRTSATTTASINVRTSATTTESTNSSTNATTTESTNSSTNATTTESTNSNTSATTTASINVRTSATTTESTNSSTSATTTASINVRTSATTTKSINSSTNATTTESTNSNTNATTTESTNSSTNATTTESTNSSTNATTTESTNSNTSAATTESTNSNTSATTTESTNASAKEDANKDGNAEDNRFHPVTDINKESYKRKGSQMVLLERKKLKAQFPNTSENMNVLQFLGFRSDEIKHLFLYGIDIYFCPEGVFTQYGLCKGCQKMFELCVCWAGQKVSYRRIAWEALAVERMLRNDEEYKEYLEDIEPYHGDPVGYLKYFSVKRREIYSQIQRNYAWYLAITRRRETISVLDSTRGKQGSQVFRMSGRQIKELYFKVWSNLRESKTEVLQYFLNWDEKKCQEEWEAKDDTVVVEALEKGGVFQRLRSMTSAGLQGPQYVKLQFSRHHRQLRSRYELSLGMHLRDQIALGVTPSKVPHWTAFLSMLIGLFYNKTFRQKLEYLLEQISEVWLLPHWLDLANVEVLAADDTRVPLYMLMVAVHKELDSDDVPDGRFDILLCRDSSREVGE.

Positions 668–845 (EIYMADTPSV…LQRIGLTGLA (178 aa)) constitute a Helicase ATP-binding domain. 681–688 (APPGYGKT) is a binding site for ATP. One can recognise a Helicase C-terminal domain in the interval 900-1051 (ALKLLLALFE…EFYGLESKKG (152 aa)). Positions 1142–1360 (NVRTNATTNA…ATTTESTNAS (219 aa)) are enriched in low complexity. A disordered region spans residues 1142–1384 (NVRTNATTNA…RFHPVTDINK (243 aa)). Basic and acidic residues predominate over residues 1361 to 1384 (AKEDANKDGNAEDNRFHPVTDINK).

It belongs to the helicase family. Yeast subtelomeric Y' repeat subfamily.

In terms of biological role, catalyzes DNA unwinding and is involved in telomerase-independent telomere maintenance. The polypeptide is Y' element ATP-dependent helicase YIL177C (Saccharomyces cerevisiae (strain ATCC 204508 / S288c) (Baker's yeast)).